We begin with the raw amino-acid sequence, 361 residues long: Phospho-N-acetylmuramoyl-pentapeptide-transferase (361 aa).

Helical transmembrane passes span 25 to 45 (RGILAALTALFLSLWMGPAVI), 73 to 93 (TMGGSLILLTVTLSVLLWGDL), 98 to 118 (VWLVLAVMICFGAIGWYDDWI), 139 to 159 (IFGLAAGLFLYYTADVPAAIT), 168 to 188 (IALPLAGVSFVVIAYFWIVGF), 200 to 220 (GLAIMPTVLVACALGVFAYAS), 237 to 257 (AGELIIICSAIAGAGLGFLWF), 264 to 284 (VFMGDIGALSLGAVLGTIAVI), 290 to 310 (VLVIMGGVFVIETLSVMIQVV), and 339 to 359 (VIVRFWIISVVLVLIGLATLK).

This sequence belongs to the glycosyltransferase 4 family. MraY subfamily. Mg(2+) serves as cofactor.

The protein localises to the cell inner membrane. The enzyme catalyses UDP-N-acetyl-alpha-D-muramoyl-L-alanyl-gamma-D-glutamyl-meso-2,6-diaminopimeloyl-D-alanyl-D-alanine + di-trans,octa-cis-undecaprenyl phosphate = di-trans,octa-cis-undecaprenyl diphospho-N-acetyl-alpha-D-muramoyl-L-alanyl-D-glutamyl-meso-2,6-diaminopimeloyl-D-alanyl-D-alanine + UMP. Its pathway is cell wall biogenesis; peptidoglycan biosynthesis. Catalyzes the initial step of the lipid cycle reactions in the biosynthesis of the cell wall peptidoglycan: transfers peptidoglycan precursor phospho-MurNAc-pentapeptide from UDP-MurNAc-pentapeptide onto the lipid carrier undecaprenyl phosphate, yielding undecaprenyl-pyrophosphoryl-MurNAc-pentapeptide, known as lipid I. The sequence is that of Phospho-N-acetylmuramoyl-pentapeptide-transferase from Xanthomonas euvesicatoria pv. vesicatoria (strain 85-10) (Xanthomonas campestris pv. vesicatoria).